We begin with the raw amino-acid sequence, 106 residues long: Gibberellin-regulated protein 12 (106 aa).

Positions 1–22 (MMKLIVVFVISSLLFATQFSNG) are cleaved as a signal peptide.

It belongs to the GASA family. Post-translationally, six disulfide bonds may be present.

The protein localises to the secreted. In terms of biological role, gibberellin-regulated protein that may function in hormonal controlled steps of development such as seed germination, flowering and seed maturation. This is Gibberellin-regulated protein 12 (GASA12) from Arabidopsis thaliana (Mouse-ear cress).